We begin with the raw amino-acid sequence, 499 residues long: Myocyte-specific enhancer factor 2A (499 aa).

The MADS-box domain maps to 3–57; it reads RKKIQITRIMDERNRQVTFTKRKFGLMKKAYELSVLCDCEIALIIFNSSNKLFQY. Residue Lys-4 is modified to N6-acetyllysine. The segment at residues 58 to 86 is a DNA-binding region (mef2-type); it reads ASTDMDKVLLKYTEYNEPHESRTNSDIVE. The residue at position 117 (Lys-117) is an N6-acetyllysine. Positions 173-185 are enriched in low complexity; sequence TSTTMLSPPQTTL. The interval 173 to 269 is disordered; it reads TSTTMLSPPQ…GGGLGMNNRK (97 aa). Polar residues predominate over residues 210-233; it reads TDLTVPNGAGTSPVGNGVWNSRAS. N6-acetyllysine is present on residues Lys-248, Lys-253, Lys-269, and Lys-281. A required for interaction with MAPKs region spans residues 265–282; that stretch reads MNNRKPDLRVVIPPSSKG. The segment at 288–295 is beta domain; the sequence is TEEDELEL. Residues 380 to 392 show a composition bias toward low complexity; it reads VSGSQLSQGSNLS. Positions 380 to 499 are disordered; sequence VSGSQLSQGS…KRMRMDTWVT (120 aa). Lys-402 bears the N6-acetyllysine; alternate mark. A Glycyl lysine isopeptide (Lys-Gly) (interchain with G-Cter in SUMO); alternate cross-link involves residue Lys-402. The span at 421 to 436 shows a compositional bias: pro residues; the sequence is QQPPQQPQPPQPPQQP. Positions 445 to 458 are enriched in low complexity; that stretch reads SPVDSLSSSSSSYD. Basic and acidic residues-rich tracts occupy residues 459–469 and 480–499; these read GSDREDPRSDF and NSED…TWVT.

Binds DNA as a homo- or heterodimer. Post-translationally, sumoylation on Lys-402 is enhanced by PIAS1 and represses transcriptional activity. Has no effect on nuclear location nor on DNA binding. Sumoylated by SUMO1 and, to a lesser extent by SUMO2 and SUMO3. In terms of processing, acetylation on Lys-402 activates transcriptional activity. As to expression, expressed in both embryonic and adult tissues with high expression in heart and skeletal muscle. Also expressed in gut, lung and brain of 15 dpc embryos and adults.

It localises to the nucleus. Its function is as follows. Transcriptional activator which binds specifically to the MEF2 element, 5'-YTA[AT](4)TAR-3', found in numerous muscle-specific genes. Mediates cellular functions in skeletal and cardiac muscle development,. The chain is Myocyte-specific enhancer factor 2A (MEF2A) from Gallus gallus (Chicken).